A 68-amino-acid chain; its full sequence is Guanine nucleotide-binding protein G(I)/G(S)/G(O) subunit gamma-10 (68 aa).

Ser-2 is modified (N-acetylserine). A Cysteine methyl ester modification is found at Cys-65. Cys-65 carries the S-geranylgeranyl cysteine lipid modification. Positions 66–68 are cleaved as a propeptide — removed in mature form; the sequence is ALL.

This sequence belongs to the G protein gamma family. In terms of assembly, g proteins are composed of 3 units, alpha, beta and gamma. Abundantly and ubiquitously expressed.

The protein localises to the cell membrane. Guanine nucleotide-binding proteins (G proteins) are involved as a modulator or transducer in various transmembrane signaling systems. The beta and gamma chains are required for the GTPase activity, for replacement of GDP by GTP, and for G protein-effector interaction. Interacts with beta-1 and beta-2, but not with beta-3. This chain is Guanine nucleotide-binding protein G(I)/G(S)/G(O) subunit gamma-10 (GNG10), found in Homo sapiens (Human).